A 385-amino-acid polypeptide reads, in one-letter code: Protein hunchback (385 aa).

Disordered regions lie at residues 1-94 (IGGI…YDAM) and 124-216 (ESRA…PGLR). Over residues 63 to 77 (SASPSSSSKDSNGHS) the composition is skewed to low complexity. Composition is skewed to basic and acidic residues over residues 126-135 (RASDARDHSP) and 173-203 (PERRSFDRFHDSGFDGVDHNKHDGDDGREGS). 4 consecutive C2H2-type zinc fingers follow at residues 229 to 251 (FKCKQCEFVAVTKLSFWEHSKEH), 258 to 280 (LCCRKCPFVTEYKHHLEYHMRNH), 286 to 308 (FQCSQCSYSCVNKSMLNSHLKSH), and 314 to 338 (YRCADCNYATKYCDSLKLHLRKYQH). Residues 361-385 (TRRGPKQKPLSKIFEQQTGTNNHSP) are disordered. A compositionally biased stretch (polar residues) spans 374–385 (FEQQTGTNNHSP).

Belongs to the hunchback C2H2-type zinc-finger protein family.

Its subcellular location is the nucleus. Its function is as follows. Gap class segmentation protein that controls development of head structures. This Bombyx mori (Silk moth) protein is Protein hunchback (hb).